Reading from the N-terminus, the 367-residue chain is Alanine racemase (367 aa).

Catalysis depends on Lys35, which acts as the Proton acceptor; specific for D-alanine. Lys35 is subject to N6-(pyridoxal phosphate)lysine. Position 130 (Arg130) interacts with substrate. The active-site Proton acceptor; specific for L-alanine is Tyr259. Met307 provides a ligand contact to substrate.

It belongs to the alanine racemase family. Pyridoxal 5'-phosphate serves as cofactor.

It catalyses the reaction L-alanine = D-alanine. The protein operates within amino-acid biosynthesis; D-alanine biosynthesis; D-alanine from L-alanine: step 1/1. Its function is as follows. Catalyzes the interconversion of L-alanine and D-alanine. May also act on other amino acids. The polypeptide is Alanine racemase (alr) (Delftia acidovorans (strain DSM 14801 / SPH-1)).